Reading from the N-terminus, the 502-residue chain is Lysine--tRNA ligase (502 aa).

Mg(2+) is bound by residues glutamate 413 and glutamate 420.

This sequence belongs to the class-II aminoacyl-tRNA synthetase family. In terms of assembly, homodimer. The cofactor is Mg(2+).

It is found in the cytoplasm. It carries out the reaction tRNA(Lys) + L-lysine + ATP = L-lysyl-tRNA(Lys) + AMP + diphosphate. This is Lysine--tRNA ligase (lysS) from Haemophilus influenzae (strain ATCC 51907 / DSM 11121 / KW20 / Rd).